Here is a 150-residue protein sequence, read N- to C-terminus: Transcriptional repressor NrdR (150 aa).

A zinc finger lies at 3–34 (CPFCGYEETKVLDSRPVSNGTSIRRRRECLQC). The region spanning 49–139 (IRIIKKDGRR…VYKEFRDLDS (91 aa)) is the ATP-cone domain.

This sequence belongs to the NrdR family. Zn(2+) is required as a cofactor.

Its function is as follows. Negatively regulates transcription of bacterial ribonucleotide reductase nrd genes and operons by binding to NrdR-boxes. This chain is Transcriptional repressor NrdR, found in Petrotoga mobilis (strain DSM 10674 / SJ95).